Reading from the N-terminus, the 109-residue chain is Phycoerythrin alpha-1 subunit (109 aa).

(2R,3E)-phycocyanobilin contacts are provided by Val6, Ala16, Phe17, Pro20, Asp27, Ala28, and Ala39.

Belongs to the phycoerythrin family. As to quaternary structure, heterotetramer of 2 identical alpha chains and 2 identical beta chains which form 2 alpha-beta heterodimers within the heterotetramer. The two alpha-beta heterodimers are rotated to an open configuration in contrast to the closed configuration found in other cryptophyte species due to the insertion of a single amino acid, Asp-65, in a conserved region of the alpha chain. In the open form, the central chromophores are not in physical contact but are separated by a water-filled channel. Post-translationally, contains three phycocyanobilin chromophores with binding mediated by both the alpha and beta subunits.

The protein resides in the plastid. It localises to the chloroplast thylakoid membrane. Its function is as follows. Light-harvesting photosynthetic tetrapyrrole chromophore-protein from the phycobiliprotein complex. This chain is Phycoerythrin alpha-1 subunit, found in Hemiselmis virescens.